A 1430-amino-acid chain; its full sequence is 3'-5' RNA helicase YTHDC2 (1430 aa).

Positions 1–37 are disordered; sequence MSRPSSVSPRQPAPGGGGGGGPSPCGPGGGGRAKGLK. The span at 14 to 33 shows a compositional bias: gly residues; the sequence is PGGGGGGGPSPCGPGGGGRA. The 69-residue stretch at 38–106 folds into the R3H domain; it reads DIRIDEEVKI…NRYLTVKKKD (69 aa). The Helicase ATP-binding domain occupies 203–369; the sequence is VKIIKENKVV…FGSCPVIYIQ (167 aa). ATP is bound at residue 216-223; the sequence is GETGSGKT. The DEAH box motif lies at 316-319; sequence DEVH. 2 ANK repeats span residues 506 to 538 and 539 to 571; these read TSATALMVAAGRGFASQVEQLISMGANVHSKAS and NGWMALDWAKHFGQTEIVDLLESYSASLEFGNL. Positions 612–784 constitute a Helicase C-terminal domain; the sequence is LLYNICHSCD…ELCLHTKLLA (173 aa). 3 positions are modified to phosphoserine: Ser1089, Ser1090, and Ser1092. Polar residues predominate over residues 1164 to 1174; that stretch reads EQSAGLQQPSG. Residues 1164–1288 are disordered; that stretch reads EQSAGLQQPS…SPSPRPNMPV (125 aa). Residues 1191–1200 are compositionally biased toward low complexity; it reads SSWRSNNSRK. Ser1202 is modified (phosphoserine). Over residues 1231–1249 the composition is skewed to basic and acidic residues; that stretch reads KYKDRGILHPKRGTEDRSD. Over residues 1250–1264 the composition is skewed to low complexity; it reads QSSVKSTDSSSYPSP. Residues Ser1263, Ser1267, and Ser1281 each carry the phosphoserine modification. The YTH domain maps to 1288-1418; that stretch reads VRYFIMKSSN…QVGEQLLQLW (131 aa). RNA contacts are provided by residues 1294-1296, Trp1310, and Trp1360; that span reads KSS.

It belongs to the DEAD box helicase family. DEAH subfamily. In terms of assembly, interacts with MEIOC; binds transcripts that regulate the mitotic cell cycle inhibiting progression into metaphase, thereby allowing meiotic prophase to proceed normally. Interacts (via ANK repeats) with XRN1. Interacts with ZCCHC4. Associates with the small ribosomal subunit. Interacts with RBM46.

The protein localises to the cytoplasm. It is found in the perinuclear region. The catalysed reaction is ATP + H2O = ADP + phosphate + H(+). 3'-5' RNA helicase that plays a key role in the male and female germline by promoting transition from mitotic to meiotic divisions in stem cells. Specifically recognizes and binds N6-methyladenosine (m6A)-containing RNAs, a modification present at internal sites of mRNAs and some non-coding RNAs that plays a role in the efficiency of RNA processing and stability. Essential for ensuring a successful progression of the meiotic program in the germline by regulating the level of m6A-containing RNAs. Acts by binding and promoting degradation of m6A-containing mRNAs: the 3'-5' RNA helicase activity is required for this process and RNA degradation may be mediated by XRN1 exoribonuclease. Required for both spermatogenesis and oogenesis. The protein is 3'-5' RNA helicase YTHDC2 of Pongo abelii (Sumatran orangutan).